A 674-amino-acid polypeptide reads, in one-letter code: CRS2-associated factor 1, chloroplastic (674 aa).

The transit peptide at 1 to 54 (MATARLPSRSFLSPAQQSYPRLPASVRLCLSHHEQPPTGPKRHRRAATSHPAFS) directs the protein to the chloroplast. The disordered stretch occupies residues 31–61 (SHHEQPPTGPKRHRRAATSHPAFSAAARGRA). The span at 48–57 (TSHPAFSAAA) shows a compositional bias: low complexity. CRM domains follow at residues 183–279 (EPLT…TRPC) and 301–397 (GGLT…LPPL). The tract at residues 554 to 576 (GLLCLLEQAIHSGRALVLSEDEL) is CRS2 binding.

As to quaternary structure, interacts with CRS2 and RNA. Part of large ribonucleo-protein complexes that include group IIB introns, CRS2 and CAF1.

The protein localises to the plastid. The protein resides in the chloroplast stroma. In terms of biological role, required for the splicing of group IIB introns in chloroplasts. Forms splicing particles with CRS2. Interacts with RNA and confers intron specificity of the splicing particles. The polypeptide is CRS2-associated factor 1, chloroplastic (CAF1) (Zea mays (Maize)).